The sequence spans 299 residues: Zeta-sarcoglycan (299 aa).

Residues 1 to 37 (MTREQYILATQQNNLPRTENAQLYPVGIYGWRKRCLY) are Cytoplasmic-facing. The helical; Signal-anchor for type II membrane protein transmembrane segment at 38–58 (FFVLLLLVTMIVNLAMTIWIL) threads the bilayer. The Extracellular segment spans residues 59–299 (KVMNFTVDGM…QSSSNICLWS (241 aa)). N-linked (GlcNAc...) asparagine glycans are attached at residues asparagine 62 and asparagine 110. The cysteines at positions 273 and 289 are disulfide-linked.

This sequence belongs to the sarcoglycan beta/delta/gamma/zeta family.

It is found in the cell membrane. It localises to the sarcolemma. Its subcellular location is the cytoplasm. The protein resides in the cytoskeleton. In terms of biological role, component of the sarcoglycan complex, a subcomplex of the dystrophin-glycoprotein complex which forms a link between the F-actin cytoskeleton and the extracellular matrix. May play a role in the maintenance of striated muscle membrane stability. This Homo sapiens (Human) protein is Zeta-sarcoglycan (SGCZ).